A 230-amino-acid chain; its full sequence is Orotidine 5'-phosphate decarboxylase (230 aa).

Residues aspartate 16, lysine 38, 65–74, threonine 119, arginine 180, glutamine 189, glycine 209, and arginine 210 contribute to the substrate site; that span reads DLKLHDIGNT. Lysine 67 functions as the Proton donor in the catalytic mechanism.

This sequence belongs to the OMP decarboxylase family. Type 1 subfamily. Homodimer.

The enzyme catalyses orotidine 5'-phosphate + H(+) = UMP + CO2. Its pathway is pyrimidine metabolism; UMP biosynthesis via de novo pathway; UMP from orotate: step 2/2. Functionally, catalyzes the decarboxylation of orotidine 5'-monophosphate (OMP) to uridine 5'-monophosphate (UMP). In Methylobacterium radiotolerans (strain ATCC 27329 / DSM 1819 / JCM 2831 / NBRC 15690 / NCIMB 10815 / 0-1), this protein is Orotidine 5'-phosphate decarboxylase.